The chain runs to 431 residues: RbAp48-related WD40 repeat-containing protein prw1 (431 aa).

6 WD repeats span residues 127–159 (SHPESVCSAKLMPQDDSCVATVGNYHNDVLVFD), 182–213 (KHTQPCTSVCWNFLSKGTLVSGSQDATLSCWD), 232–263 (SHEKQVSDVRFHYKHQDLLASVSYDQYLHVHD), 279–310 (AHSGPIHSVAFNPHNDFILATCSTDKTIALWD), 323–354 (GHEDIVTKISFSPHEEPILASTSADRRTLVWD), and 380–411 (GHTSCTIDMDWCPNYNWTMATAAEDNILQIWT).

It belongs to the WD repeat HIR1 family. Heterotetramer of alp13, clr6, prw1 and pst2.

Its subcellular location is the nucleus. Has a role in chromatin assembly and chromosome segregation. Involved in the deacetylation of histones. In Schizosaccharomyces pombe (strain 972 / ATCC 24843) (Fission yeast), this protein is RbAp48-related WD40 repeat-containing protein prw1 (prw1).